The following is a 183-amino-acid chain: MTANAQQLQFIKDSIETIPDYPKPGVLFRDITTLLDNPLAYQATIDLLVERYQGKGITKIVGTEARGFLFGAPVALRLGVGFIPVRKAGKLPRETLSETYNLEYGTDTLEMHKDSVRENDKVLVIDDLLATGGTVEATVRLIRRLGGEVSEAAFIIGLLGLGGVERLQRQGVSSFTLLEFPDH.

It belongs to the purine/pyrimidine phosphoribosyltransferase family. Homodimer.

The protein localises to the cytoplasm. It carries out the reaction AMP + diphosphate = 5-phospho-alpha-D-ribose 1-diphosphate + adenine. It functions in the pathway purine metabolism; AMP biosynthesis via salvage pathway; AMP from adenine: step 1/1. In terms of biological role, catalyzes a salvage reaction resulting in the formation of AMP, that is energically less costly than de novo synthesis. In Photorhabdus laumondii subsp. laumondii (strain DSM 15139 / CIP 105565 / TT01) (Photorhabdus luminescens subsp. laumondii), this protein is Adenine phosphoribosyltransferase.